The sequence spans 246 residues: Neurotrophic factor BDNF precursor form (246 aa).

The first 18 residues, 1-18 (MTILFLTMVISYLSCMKA), serve as a signal peptide directing secretion. Positions 19 to 127 (TPMKEVSIRG…AANMSMRVRR (109 aa)) are excised as a propeptide. N-linked (GlcNAc...) asparagine glycosylation occurs at asparagine 120. 3 disulfide bridges follow: cysteine 140/cysteine 207, cysteine 185/cysteine 236, and cysteine 195/cysteine 238.

Belongs to the NGF-beta family.

The protein localises to the secreted. Functionally, promotes the survival of neuronal populations that are all located either in the central nervous system or directly connected to it. In Ptyas major (Chinese green snake), this protein is Neurotrophic factor BDNF precursor form (BDNF).